Here is a 117-residue protein sequence, read N- to C-terminus: Large ribosomal subunit protein uL18 (117 aa).

Belongs to the universal ribosomal protein uL18 family. Part of the 50S ribosomal subunit; part of the 5S rRNA/L5/L18/L25 subcomplex. Contacts the 5S and 23S rRNAs.

Functionally, this is one of the proteins that bind and probably mediate the attachment of the 5S RNA into the large ribosomal subunit, where it forms part of the central protuberance. The polypeptide is Large ribosomal subunit protein uL18 (Vibrio atlanticus (strain LGP32) (Vibrio splendidus (strain Mel32))).